The primary structure comprises 447 residues: Ribulose bisphosphate carboxylase large chain (447 aa).

Substrate-binding residues include Asn-89 and Thr-139. Lys-141 serves as the catalytic Proton acceptor. Lys-143 serves as a coordination point for substrate. Mg(2+)-binding residues include Lys-167, Asp-169, and Glu-170. Lys-167 is modified (N6-carboxylysine). His-260 serves as the catalytic Proton acceptor. Substrate-binding residues include Arg-261, His-293, and Ser-345.

Belongs to the RuBisCO large chain family. Type I subfamily. As to quaternary structure, heterohexadecamer of 8 large chains and 8 small chains; disulfide-linked. The disulfide link is formed within the large subunit homodimers. The cofactor is Mg(2+). The disulfide bond which can form in the large chain dimeric partners within the hexadecamer appears to be associated with oxidative stress and protein turnover.

The protein localises to the plastid. Its subcellular location is the chloroplast. The catalysed reaction is 2 (2R)-3-phosphoglycerate + 2 H(+) = D-ribulose 1,5-bisphosphate + CO2 + H2O. It carries out the reaction D-ribulose 1,5-bisphosphate + O2 = 2-phosphoglycolate + (2R)-3-phosphoglycerate + 2 H(+). Functionally, ruBisCO catalyzes two reactions: the carboxylation of D-ribulose 1,5-bisphosphate, the primary event in carbon dioxide fixation, as well as the oxidative fragmentation of the pentose substrate in the photorespiration process. Both reactions occur simultaneously and in competition at the same active site. The polypeptide is Ribulose bisphosphate carboxylase large chain (Convolvulus tricolor (Dwarf morning glory)).